We begin with the raw amino-acid sequence, 654 residues long: MPTLLQHAQIDWDDQGRPHSRHYDDVYFAVNEGIEETKHVFLGQTRLAERFANLAPHACTVIGETGFGTGMNFFCAWQLFDQHAHSDARLHFVSVEKYPLDHADMARAVRLWPELAAYTEPLLEQYVAVHPGFQQFTFTGGRVTLTLLIGDVLEQLPQLDAQIDVWFLDGFAPAKNPDMWTPELFAQLARLSHPGTVLGTFTTTGWVRRSLVEAGFAMKKVPGIGKKWEVMSGAYVGPLPGPCAPWYARPAVTQGPREALVIGAGLAGSSSAASLARRGWQVTVLERHEAPAQEASGNPQGVLYLKLSAHGTALSQMILSGFGYTRRQLQRLQRGRDWDACGVLQLAFDSKEAERQGKLAAAFDPGLLHCLARAEAEAIAGVALPGGGLFYPEGGWVHPPALCQQQLQHPGIHLVTHQEVLELRKVDEQWQAWAGDQLLARAPVVVLAGAADVLRFEPCAQLPLKRIRGQITRLPATVSSQALRTVVCAEGYVAPPREGEHTLGASFDFHSEDLAPTVAEHQGNLALLDEISVDLAQRLAVAELDPEQLQGRAAFRCTSPDYLPIVGPIADAQAFAEAYAVLGRDARQVPDVPCPWLGGLYVNSGHGSRGLITAPLSGELVAAWVCGEPLPLPRAVAQACHPNRFGLRRLIRGK.

The interval 1-236 (MPTLLQHAQI…KWEVMSGAYV (236 aa)) is tRNA (mnm(5)s(2)U34)-methyltransferase. The segment at 262-654 (IGAGLAGSSS…FGLRRLIRGK (393 aa)) is FAD-dependent cmnm(5)s(2)U34 oxidoreductase.

It in the N-terminal section; belongs to the methyltransferase superfamily. tRNA (mnm(5)s(2)U34)-methyltransferase family. The protein in the C-terminal section; belongs to the DAO family. FAD serves as cofactor.

Its subcellular location is the cytoplasm. It carries out the reaction 5-aminomethyl-2-thiouridine(34) in tRNA + S-adenosyl-L-methionine = 5-methylaminomethyl-2-thiouridine(34) in tRNA + S-adenosyl-L-homocysteine + H(+). Its function is as follows. Catalyzes the last two steps in the biosynthesis of 5-methylaminomethyl-2-thiouridine (mnm(5)s(2)U) at the wobble position (U34) in tRNA. Catalyzes the FAD-dependent demodification of cmnm(5)s(2)U34 to nm(5)s(2)U34, followed by the transfer of a methyl group from S-adenosyl-L-methionine to nm(5)s(2)U34, to form mnm(5)s(2)U34. In Pseudomonas putida (strain ATCC 47054 / DSM 6125 / CFBP 8728 / NCIMB 11950 / KT2440), this protein is tRNA 5-methylaminomethyl-2-thiouridine biosynthesis bifunctional protein MnmC.